Here is an 80-residue protein sequence, read N- to C-terminus: Large ribosomal subunit protein bL31B (80 aa).

It belongs to the bacterial ribosomal protein bL31 family. Type B subfamily. In terms of assembly, part of the 50S ribosomal subunit.

The protein is Large ribosomal subunit protein bL31B of Oenococcus oeni (strain ATCC BAA-331 / PSU-1).